The following is a 390-amino-acid chain: Glutamate 5-kinase (390 aa).

An ATP-binding site is contributed by K29. Positions 69, 156, and 168 each coordinate substrate. Residue 188–189 (TD) participates in ATP binding. Residues 295-374 (SGSLIVDAGA…EQFDRILGNN (80 aa)) form the PUA domain.

This sequence belongs to the glutamate 5-kinase family.

It localises to the cytoplasm. The enzyme catalyses L-glutamate + ATP = L-glutamyl 5-phosphate + ADP. The protein operates within amino-acid biosynthesis; L-proline biosynthesis; L-glutamate 5-semialdehyde from L-glutamate: step 1/2. In terms of biological role, catalyzes the transfer of a phosphate group to glutamate to form L-glutamate 5-phosphate. The polypeptide is Glutamate 5-kinase (Psychrobacter arcticus (strain DSM 17307 / VKM B-2377 / 273-4)).